The chain runs to 699 residues: Elongation factor G (699 aa).

The tr-type G domain maps to 8-283 (EHIRNIGICA…AVVDFLPSPI (276 aa)). GTP contacts are provided by residues 17–24 (AHIDAGKT), 81–85 (DTPGH), and 135–138 (NKMD).

Belongs to the TRAFAC class translation factor GTPase superfamily. Classic translation factor GTPase family. EF-G/EF-2 subfamily.

It localises to the cytoplasm. Its function is as follows. Catalyzes the GTP-dependent ribosomal translocation step during translation elongation. During this step, the ribosome changes from the pre-translocational (PRE) to the post-translocational (POST) state as the newly formed A-site-bound peptidyl-tRNA and P-site-bound deacylated tRNA move to the P and E sites, respectively. Catalyzes the coordinated movement of the two tRNA molecules, the mRNA and conformational changes in the ribosome. The protein is Elongation factor G of Rickettsia sibirica (strain ATCC VR-151 / 246).